The sequence spans 239 residues: Probable 2-phosphosulfolactate phosphatase (239 aa).

Belongs to the ComB family. The cofactor is Mg(2+).

It catalyses the reaction (2R)-O-phospho-3-sulfolactate + H2O = (2R)-3-sulfolactate + phosphate. The protein is Probable 2-phosphosulfolactate phosphatase of Clostridium botulinum (strain Okra / Type B1).